Consider the following 174-residue polypeptide: Ferredoxin-2, mitochondrial (174 aa).

The transit peptide at 1 to 43 (MAASMARGVSARVLLRAAGGSWGPRAGHAAVTSRTFGTTGERR) directs the protein to the mitochondrion. Residues 26–52 (AGHAAVTSRTFGTTGERRAGEEAADSP) are disordered. One can recognise a 2Fe-2S ferredoxin-type domain in the interval 59–161 (VNVVFVDRSG…GVEFALPKIT (103 aa)). Positions 96, 102, 105, and 142 each coordinate [2Fe-2S] cluster.

The protein belongs to the adrenodoxin/putidaredoxin family. As to quaternary structure, component of the mitochondrial core iron-sulfur cluster (ISC) complex composed of NFS1, LYRM4, NDUFAB1, ISCU, FXN, and FDX2; this complex is a heterohexamer containing two copies of each monomer. Form a heterodimer complex with NFS1. Interacts (in both their reduced and oxidized states) with the cysteine desulfurase (NFS1:LYRM4) complex; this interaction stimulates cysteine desulfurase activity, and serves as a reductant for Fe-S cluster assembly. The cofactor is [2Fe-2S] cluster.

Its subcellular location is the mitochondrion. It is found in the mitochondrion matrix. Its function is as follows. Electron donor, of the core iron-sulfur cluster (ISC) assembly complex, that acts to reduce the persulfide into sulfide during [2Fe-2S] clusters assembly on the scaffolding protein ISCU. The core iron-sulfur cluster (ISC) assembly complex is involved in the de novo synthesis of a [2Fe-2S] cluster, the first step of the mitochondrial iron-sulfur protein biogenesis. This process is initiated by the cysteine desulfurase complex (NFS1:LYRM4:NDUFAB1) that produces persulfide which is delivered on the scaffold protein ISCU in a FXN-dependent manner. Then this complex is stabilized by FDX2 which provides reducing equivalents to accomplish the [2Fe-2S] cluster assembly. Finally, the [2Fe-2S] cluster is transferred from ISCU to chaperone proteins, including HSCB, HSPA9 and GLRX5. Essential for coenzyme Q biosynthesis: together with FDXR, transfers the electrons required for the hydroxylation reaction performed by COQ6. The polypeptide is Ferredoxin-2, mitochondrial (Mus musculus (Mouse)).